The primary structure comprises 185 residues: UPF0669 protein C6orf120 homolog (185 aa).

The signal sequence occupies residues Met1–Thr23. N-linked (GlcNAc...) asparagine glycosylation occurs at Asn47.

It belongs to the UPF0669 family.

It is found in the secreted. The sequence is that of UPF0669 protein C6orf120 homolog from Gallus gallus (Chicken).